A 262-amino-acid chain; its full sequence is Tropinone reductase homolog At2g30670 (262 aa).

Residue 13 to 37 participates in NADP(+) binding; the sequence is LVTGGASGIGHAIVEELAGLGARIY. Position 146 (Ser146) interacts with substrate. Residue Tyr159 is the Proton acceptor of the active site.

The protein belongs to the short-chain dehydrogenases/reductases (SDR) family. SDR65C subfamily.

In Arabidopsis thaliana (Mouse-ear cress), this protein is Tropinone reductase homolog At2g30670.